The following is a 200-amino-acid chain: Large ribosomal subunit protein uL4 (200 aa).

Positions 38-68 (GRQGSKQQKTRSDVRGGGKRPWRQKGTGRAR) are disordered. Over residues 54-65 (GGKRPWRQKGTG) the composition is skewed to basic residues.

Belongs to the universal ribosomal protein uL4 family. As to quaternary structure, part of the 50S ribosomal subunit.

Functionally, one of the primary rRNA binding proteins, this protein initially binds near the 5'-end of the 23S rRNA. It is important during the early stages of 50S assembly. It makes multiple contacts with different domains of the 23S rRNA in the assembled 50S subunit and ribosome. Forms part of the polypeptide exit tunnel. This chain is Large ribosomal subunit protein uL4, found in Pseudomonas fluorescens (strain Pf0-1).